A 236-amino-acid polypeptide reads, in one-letter code: Glucosamine-6-phosphate deaminase (236 aa).

Residue Asp-62 is the Proton acceptor; for enolization step of the active site. Residue Asn-128 is the For ring-opening step of the active site. The active-site Proton acceptor; for ring-opening step is the His-130. Catalysis depends on Glu-135, which acts as the For ring-opening step.

This sequence belongs to the glucosamine/galactosamine-6-phosphate isomerase family. NagB subfamily.

It carries out the reaction alpha-D-glucosamine 6-phosphate + H2O = beta-D-fructose 6-phosphate + NH4(+). The protein operates within amino-sugar metabolism; N-acetylneuraminate degradation; D-fructose 6-phosphate from N-acetylneuraminate: step 5/5. Its function is as follows. Catalyzes the reversible isomerization-deamination of glucosamine 6-phosphate (GlcN6P) to form fructose 6-phosphate (Fru6P) and ammonium ion. This Pediococcus pentosaceus (strain ATCC 25745 / CCUG 21536 / LMG 10740 / 183-1w) protein is Glucosamine-6-phosphate deaminase.